The primary structure comprises 400 residues: Large envelope protein (400 aa).

An N-acetylmethionine modification is found at Met-1. Disordered stretches follow at residues 1–42 and 84–118; these read MGGY…NNPD and ILTT…SHPQ. Gly-2 carries N-myristoyl glycine; by host lipidation. The pre-S1 stretch occupies residues 2–119; that stretch reads GGYSSKPRKG…PPLRDSHPQA (118 aa). The tract at residues 2-174 is pre-S; the sequence is GGYSSKPRKG…FSRTGDPVPK (173 aa). The Virion surface; in external conformation segment spans residues 2 to 181; it reads GGYSSKPRKG…VPKMENTTSG (180 aa). The Intravirion; in internal conformation segment spans residues 2 to 253; that stretch reads GGYSSKPRKG…PGYRWMCLRR (252 aa). The N-linked (GlcNAc...) asparagine glycan is linked to Tyr-4. Residues 120–174 are pre-S2; that stretch reads MQWNSTTFHQALLDPRVRGLYFPAGGSSSGTANPVPTTASPISSIFSRTGDPVPK. The chain crosses the membrane as a helical span at residues 182-202; the sequence is FLGPLLVLQAGFFLLTRILTI. At 203 to 253 the chain is on the intravirion; in external conformation side; it reads PQSLDSWWTSLNFLGGAPACPGQNSQSPTSNHSPTSCPPICPGYRWMCLRR. The helical transmembrane segment at 254–274 threads the bilayer; the sequence is FIIFLFILLLCLIFLLVLLDY. The Virion surface segment spans residues 275–348; that stretch reads QGMLPVCPLI…WASVRFSWLS (74 aa). An N-linked (GlcNAc...) asparagine; by host glycan is attached at Asn-320. A helical transmembrane segment spans residues 349–369; the sequence is LLAPFVQWFVGLSPTVWLSVI. Topologically, residues 370–375 are intravirion; sequence WMMWYW. The chain crosses the membrane as a helical span at residues 376–398; it reads GPSLYNILSPFLPLLPIFFCLWV. Residues 399–400 are Virion surface-facing; that stretch reads YI.

This sequence belongs to the orthohepadnavirus major surface antigen family. In its internal form (Li-HBsAg), interacts with the capsid protein and with the isoform S. Interacts with host chaperone CANX. In terms of assembly, associates with host chaperone CANX through its pre-S2 N glycan; this association may be essential for isoform M proper secretion. As to quaternary structure, interacts with isoform L. Interacts with the antigens of satellite virus HDV (HDVAgs); this interaction is required for encapsidation of HDV genomic RNA. Isoform M is N-terminally acetylated by host at a ratio of 90%, and N-glycosylated by host at the pre-S2 region. Post-translationally, myristoylated.

It localises to the virion membrane. Its function is as follows. The large envelope protein exists in two topological conformations, one which is termed 'external' or Le-HBsAg and the other 'internal' or Li-HBsAg. In its external conformation the protein attaches the virus to cell receptors and thereby initiating infection. This interaction determines the species specificity and liver tropism. This attachment induces virion internalization predominantly through caveolin-mediated endocytosis. The large envelope protein also assures fusion between virion membrane and endosomal membrane. In its internal conformation the protein plays a role in virion morphogenesis and mediates the contact with the nucleocapsid like a matrix protein. The middle envelope protein plays an important role in the budding of the virion. It is involved in the induction of budding in a nucleocapsid independent way. In this process the majority of envelope proteins bud to form subviral lipoprotein particles of 22 nm of diameter that do not contain a nucleocapsid. In Homo sapiens (Human), this protein is Large envelope protein.